The sequence spans 575 residues: Alpha-(1,6)-fucosyltransferase (575 aa).

Topologically, residues methionine 1 to arginine 9 are cytoplasmic. A helical; Signal-anchor for type II membrane protein membrane pass occupies residues tryptophan 10–valine 30. Residues arginine 31 to lysine 575 are Lumenal-facing. Disulfide bonds link cysteine 204-cysteine 266, cysteine 212-cysteine 230, and cysteine 218-cysteine 222. The GT23 domain maps to lysine 206 to leucine 493. A Phosphoserine modification is found at serine 278. The SH3-binding signature appears at proline 299–proline 305. The interval arginine 365 to arginine 366 is important for donor substrate binding. A disulfide bridge connects residues cysteine 465 and cysteine 472. In terms of domain architecture, SH3 spans proline 502 to glutamate 563.

The protein belongs to the glycosyltransferase 23 family. Post-translationally, tyrosine phosphorylated by PKDCC/VLK. Highest expression in brain.

Its subcellular location is the golgi apparatus. It localises to the golgi stack membrane. The enzyme catalyses N(4)-{beta-D-GlcNAc-(1-&gt;2)-alpha-D-Man-(1-&gt;3)-[beta-D-GlcNAc-(1-&gt;2)-alpha-D-Man-(1-&gt;6)]-beta-D-Man-(1-&gt;4)-beta-D-GlcNAc-(1-&gt;4)-beta-D-GlcNAc}-L-asparaginyl-[protein] + GDP-beta-L-fucose = an N(4)-{beta-D-GlcNAc-(1-&gt;2)-alpha-D-Man-(1-&gt;3)-[beta-D-GlcNAc-(1-&gt;2)-alpha-D-Man-(1-&gt;6)]-beta-D-Man-(1-&gt;4)-beta-D-GlcNAc-(1-&gt;4)-[alpha-L-Fuc-(1-&gt;6)]-beta-D-GlcNAc}-L-asparaginyl-[protein] + GDP + H(+). The protein operates within protein modification; protein glycosylation. Functionally, catalyzes the addition of fucose in alpha 1-6 linkage to the first GlcNAc residue, next to the peptide chains in N-glycans. The sequence is that of Alpha-(1,6)-fucosyltransferase (FUT8) from Sus scrofa (Pig).